Consider the following 796-residue polypeptide: MQSLSSSAPTPEAILEWLQKEMGYRQLGPYNGSSKSHVPSIDAIRKICRGNMIPIWNFLINRVKSEKTVERIRRNITVHGGSSNASIGSSVNPGKEESKSKGRRKDKTVTGESSSYAEDREAALQERELAAKEVERLRNIVRRQRKDLKARMLEVSREEAERKRMLDERANYRHKQALLEAYDQQCDEATRIFAEYHKRLQVYVNQANDAQRSVNSSNEVLSSLSANSEREAVYSTVKGTKSADDVILMETTRERNIRIVCDLLASRMIERIRNSFPAYEGNGICSLPELETAKLGFEYDGEITDEMKTVIVNSLRGPPLLLQAIAAYTLRIKTLISREMEKIDVRADAEMLRYKFENNRVTDNSSSDVSSPLSYQFNGNGKIGTDTHFQGSNNQLLERQKAHVQQFLATEDALNKAAEARDLCHKFINRLHGSADTATHSFVGGTTQSGSNLRQFELDVWGKEREAAGLRASLNTLLSEIQRLNKLCAERKEAEDSLKKKWKKIEEFDARRSELETIYTTLLKANMDAVAFWNQQPLAAREYASATVIPASEVVVDISNSAKDFIEKEVSAFFQSPDNSLYMLPATPQGLLESMGANGSTGPEAVAYAEKNAALLTARAGARDPSAIPSICRISAALQYPAGLEGSDASLASVLESLEFCLRVRGSEACVLEDLAKAIDLVHIRQDLVESGHSLLDHAFRAQQKYERTTNYCLDLASEQENTISDQWLPELRTAVQNAQASSEHCKYVRGLLDEWWEQPASTVVDWVTVDGQSVAAWQNHVKQLLAFYDKESLRT.

The segment at 79-120 is disordered; sequence HGGSSNASIGSSVNPGKEESKSKGRRKDKTVTGESSSYAEDR. The span at 80–92 shows a compositional bias: polar residues; that stretch reads GGSSNASIGSSVN. Coiled-coil stretches lie at residues 115–191 and 462–501; these read SYAE…EATR and GKER…LKKK.

The protein belongs to the HAUS5 family. As to quaternary structure, part of the augmin complex composed of 8 subunits. The complex acts on microtubules and interacts with gamma-tubulin in spindles and the phragmoplast.

The protein localises to the cytoplasm. Its subcellular location is the cytoskeleton. The protein resides in the spindle. It localises to the phragmoplast. Involved in microtubules reorganization during spindle and phragmoplast development. The polypeptide is AUGMIN subunit 5 (Arabidopsis thaliana (Mouse-ear cress)).